A 326-amino-acid chain; its full sequence is Putative ribose-phosphate pyrophosphokinase 2 (326 aa).

ATP contacts are provided by residues 43–45 and 102–103; these read DGE and RQ. H136 lines the Mg(2+) pocket. D-ribose 5-phosphate is bound by residues D226 and 230 to 234; that span reads NTGKT.

This sequence belongs to the ribose-phosphate pyrophosphokinase family. Class I subfamily. As to quaternary structure, homohexamer. Mg(2+) is required as a cofactor.

It is found in the cytoplasm. The enzyme catalyses D-ribose 5-phosphate + ATP = 5-phospho-alpha-D-ribose 1-diphosphate + AMP + H(+). The protein operates within metabolic intermediate biosynthesis; 5-phospho-alpha-D-ribose 1-diphosphate biosynthesis; 5-phospho-alpha-D-ribose 1-diphosphate from D-ribose 5-phosphate (route I): step 1/1. Its function is as follows. Involved in the biosynthesis of the central metabolite phospho-alpha-D-ribosyl-1-pyrophosphate (PRPP) via the transfer of pyrophosphoryl group from ATP to 1-hydroxyl of ribose-5-phosphate (Rib-5-P). The polypeptide is Putative ribose-phosphate pyrophosphokinase 2 (Streptococcus mutans serotype c (strain ATCC 700610 / UA159)).